We begin with the raw amino-acid sequence, 428 residues long: Adenylosuccinate synthetase (428 aa).

Residues 12–18 (GDEGKGK) and 40–42 (GHT) each bind GTP. Aspartate 13 functions as the Proton acceptor in the catalytic mechanism. Aspartate 13 and glycine 40 together coordinate Mg(2+). IMP contacts are provided by residues 13–16 (DEGK), 38–41 (NAGH), threonine 130, arginine 144, glutamine 225, threonine 240, and arginine 304. Histidine 41 serves as the catalytic Proton donor. Substrate is bound at residue 300–306 (VTTGRAR). GTP is bound by residues arginine 306, 332–334 (KID), and 414–416 (SVG).

It belongs to the adenylosuccinate synthetase family. Homodimer. Mg(2+) serves as cofactor.

The protein resides in the cytoplasm. It catalyses the reaction IMP + L-aspartate + GTP = N(6)-(1,2-dicarboxyethyl)-AMP + GDP + phosphate + 2 H(+). It functions in the pathway purine metabolism; AMP biosynthesis via de novo pathway; AMP from IMP: step 1/2. Functionally, plays an important role in the de novo pathway of purine nucleotide biosynthesis. Catalyzes the first committed step in the biosynthesis of AMP from IMP. The protein is Adenylosuccinate synthetase of Clostridium botulinum (strain ATCC 19397 / Type A).